Reading from the N-terminus, the 566-residue chain is Hemocyanin B chain (566 aa).

Cysteine 82 and cysteine 87 are joined by a disulfide. Residues histidine 183, histidine 187, histidine 213, histidine 309, histidine 313, and histidine 347 each contribute to the Cu cation site.

The protein belongs to the tyrosinase family. Hemocyanin subfamily. In terms of tissue distribution, hemolymph.

The protein resides in the secreted. It localises to the extracellular space. In terms of biological role, hemocyanins are copper-containing oxygen carriers occurring freely dissolved in the hemolymph of many mollusks and arthropods. The chain is Hemocyanin B chain from Astacus leptodactylus (Turkish narrow-clawed crayfish).